Here is a 115-residue protein sequence, read N- to C-terminus: DNA-binding protein Ta0052 (115 aa).

The interval 1 to 41 is disordered; sequence MDDDEELERIRRQQLESMQRQAMQEQMREEQEKQREAERAR. A compositionally biased stretch (low complexity) spans 15-25; that stretch reads LESMQRQAMQE. Residues 26–41 show a composition bias toward basic and acidic residues; sequence QMREEQEKQREAERAR.

The protein belongs to the PDCD5 family.

This chain is DNA-binding protein Ta0052, found in Thermoplasma acidophilum (strain ATCC 25905 / DSM 1728 / JCM 9062 / NBRC 15155 / AMRC-C165).